Consider the following 85-residue polypeptide: UPF0181 protein YPO1774/y2534/YP_1619 (85 aa).

Residues 50-85 (QAMAIFEDHDFDEHTESDYRRDDEPDADDIEDPYEG) are disordered. Residues 55 to 72 (FEDHDFDEHTESDYRRDD) are compositionally biased toward basic and acidic residues. Residues 73–85 (EPDADDIEDPYEG) show a composition bias toward acidic residues.

This sequence belongs to the UPF0181 family.

The protein is UPF0181 protein YPO1774/y2534/YP_1619 of Yersinia pestis.